Reading from the N-terminus, the 276-residue chain is Orotidine 5'-phosphate decarboxylase (276 aa).

The active-site Proton donor is the Lys-96.

This sequence belongs to the OMP decarboxylase family. Type 2 subfamily.

The catalysed reaction is orotidine 5'-phosphate + H(+) = UMP + CO2. It functions in the pathway pyrimidine metabolism; UMP biosynthesis via de novo pathway; UMP from orotate: step 2/2. This chain is Orotidine 5'-phosphate decarboxylase, found in Porphyromonas gingivalis (strain ATCC 33277 / DSM 20709 / CIP 103683 / JCM 12257 / NCTC 11834 / 2561).